Reading from the N-terminus, the 431-residue chain is uncharacterized protein (431 aa).

Transmembrane regions (helical) follow at residues 33 to 53, 63 to 83, 111 to 131, 143 to 163, 197 to 217, 241 to 261, 273 to 293, 318 to 338, 358 to 378, 383 to 403, and 407 to 427; these read VARVGTATAVTALCGYAVIYL, FSVFGVFWGAFGLVTGAANGL, VSGMVGLGSLVVIAGSSPLWS, VALLSIGLAGFCLHATLLGML, LVGFIWATVAGSVAWLIMLMT, AHSIIAAGASAILVMGFPVLL, GVVILAVTLTRAPLLVPLTAM, LIGGVGAVGMLAAGVVGPWIM, AAAVAIAMLTLTGAAAVAAAL, SLGWVGATVGSGLLLLLPLSL, and TVVALLCGPLVGIGVHLVALA.

The protein to M.tuberculosis Rv1510 and Rv3630.

It is found in the cell membrane. This is an uncharacterized protein from Mycobacterium bovis (strain ATCC BAA-935 / AF2122/97).